The primary structure comprises 161 residues: Vitamin K epoxide reductase complex subunit 1 (161 aa).

Topologically, residues 1 to 9 are cytoplasmic; the sequence is MGTTWRSPG. The helical transmembrane segment at 10 to 29 threads the bilayer; sequence LVRLALCLAGLALSLYALHV. Topologically, residues 30–80 are lumenal; that stretch reads KAARARDENYRALCDVGTAISCSRVFSSRWGRGFGLVEHMLGADSVLNQSN. A disulfide bridge links C43 with C51. N80 contributes to the (S)-warfarin binding site. A helical transmembrane segment spans residues 81 to 95; it reads SIFGCLFYTLQLLLG. At 96-100 the chain is on the cytoplasmic side; that stretch reads CLRGR. A helical transmembrane segment spans residues 101-128; that stretch reads WASILLVLSSLVSVAGSVYLAWILFFVL. The Lumenal segment spans residues 129–131; the sequence is YDF. Cysteines 132 and 135 form a disulfide. A helical membrane pass occupies residues 132 to 153; sequence CIVCITTYAINVGLMLLSFQKV. Residues C135 and Y139 each coordinate phylloquinone. Y139 is a binding site for (S)-warfarin. Over 154–161 the chain is Cytoplasmic; that stretch reads PEHKTKKH.

Belongs to the VKOR family. Detected in liver.

The protein resides in the endoplasmic reticulum membrane. It carries out the reaction phylloquinone + [protein]-disulfide + H2O = 2,3-epoxyphylloquinone + [protein]-dithiol. The catalysed reaction is phylloquinol + [protein]-disulfide = phylloquinone + [protein]-dithiol. Inhibited by warfarin (coumadin). Warfarin locks VKORC1 in both redox states into the closed conformation. Functionally, involved in vitamin K metabolism. Catalytic subunit of the vitamin K epoxide reductase (VKOR) complex which reduces inactive vitamin K 2,3-epoxide to active vitamin K. Vitamin K is required for the gamma-carboxylation of various proteins, including clotting factors, and is required for normal blood coagulation, but also for normal bone development. This Mus musculus (Mouse) protein is Vitamin K epoxide reductase complex subunit 1 (Vkorc1).